A 657-amino-acid chain; its full sequence is L-type lectin-domain containing receptor kinase I.8 (657 aa).

Positions 1–23 are cleaved as a signal peptide; sequence MAPGLDLIWMVISFLLLIHLSSQ. The Extracellular portion of the chain corresponds to 24 to 282; that stretch reads QETGFSFNGF…QVPHPKMKTS (259 aa). The tract at residues 25-257 is legume-lectin like; that stretch reads ETGFSFNGFR…NHYILGWSFS (233 aa). 5 N-linked (GlcNAc...) asparagine glycosylation sites follow: Asn-74, Asn-124, Asn-181, Asn-204, and Asn-225. Residues 283–303 form a helical membrane-spanning segment; it reads LLLILLLIVLGIILLVLLVGA. The Cytoplasmic segment spans residues 304–657; that stretch reads YLYRRNKYAE…THSIQYGIGR (354 aa). The 273-residue stretch at 339–611 folds into the Protein kinase domain; it reads FHKDGFLGKG…VQYLDRQVSL (273 aa). ATP-binding positions include 345-353 and Lys-366; that span reads LGKGGFGEV. Residue Asp-462 is the Proton acceptor of the active site.

It in the C-terminal section; belongs to the protein kinase superfamily. Ser/Thr protein kinase family. In the N-terminal section; belongs to the leguminous lectin family.

It is found in the cell membrane. It catalyses the reaction L-seryl-[protein] + ATP = O-phospho-L-seryl-[protein] + ADP + H(+). It carries out the reaction L-threonyl-[protein] + ATP = O-phospho-L-threonyl-[protein] + ADP + H(+). Its function is as follows. Involved in resistance response to the pathogenic fungus Alternaria brassicicola. In Arabidopsis thaliana (Mouse-ear cress), this protein is L-type lectin-domain containing receptor kinase I.8.